The chain runs to 308 residues: UDP-N-acetylenolpyruvoylglucosamine reductase (308 aa).

The 164-residue stretch at 22–185 folds into the FAD-binding PCMH-type domain; the sequence is RVGGPADWLF…TEATFRAEAG (164 aa). Arg-165 is a catalytic residue. A compositionally biased stretch (basic and acidic residues) spans 197 to 211; it reads QIARRDSSQPTKERS. Positions 197–228 are disordered; the sequence is QIARRDSSQPTKERSAGSTFRNPAGFSSTGRA. Polar residues predominate over residues 212-226; it reads AGSTFRNPAGFSSTG. The active-site Proton donor is Ser-214. Residue Glu-296 is part of the active site.

This sequence belongs to the MurB family. It depends on FAD as a cofactor.

It is found in the cytoplasm. It carries out the reaction UDP-N-acetyl-alpha-D-muramate + NADP(+) = UDP-N-acetyl-3-O-(1-carboxyvinyl)-alpha-D-glucosamine + NADPH + H(+). It participates in cell wall biogenesis; peptidoglycan biosynthesis. Functionally, cell wall formation. This chain is UDP-N-acetylenolpyruvoylglucosamine reductase, found in Cereibacter sphaeroides (strain ATCC 17023 / DSM 158 / JCM 6121 / CCUG 31486 / LMG 2827 / NBRC 12203 / NCIMB 8253 / ATH 2.4.1.) (Rhodobacter sphaeroides).